The sequence spans 702 residues: Dissimilatory sulfite reductase MccA (702 aa).

An N-terminal signal peptide occupies residues 1 to 39 (MLSGWSVLKGGNMKYWDKALLSLFMCVSTLSIAATHAVA). Positions 155, 158, 159, and 171 each coordinate heme c. Residues Lys-220 and Tyr-297 each contribute to the substrate site. Positions 314, 317, 318, 351, 354, 355, 360, 372, 375, and 376 each coordinate heme c. Arg-378 is a substrate binding site. Cys-411 provides a ligand contact to Cu(+). Positions 423, 430, 433, 434, 437, 474, 477, 478, 491, 496, 499, and 500 each coordinate heme c. Cu(+) is bound at residue Cys-507. Heme c-binding residues include His-528, Cys-574, Cys-590, His-591, and His-675.

The protein belongs to the multiheme cytochrome c family. As to quaternary structure, homotrimer. The cofactor is Cu(+). Heme c is required as a cofactor.

It localises to the periplasm. The catalysed reaction is [protein]-disulfide + hydrogen sulfide + 2 A + 3 H2O = [protein]-dithiol + sulfite + 2 AH2 + H(+). Its pathway is sulfur metabolism; sulfite reduction. Functionally, respiratory sulfite reductase that catalyzes the reduction of sulfite to sulfide in a single step, consuming six electrons in the process. Required for sulfite respiration under anaerobic growth conditions. Has only marginal activity with nitrite. The polypeptide is Dissimilatory sulfite reductase MccA (Wolinella succinogenes (strain ATCC 29543 / DSM 1740 / CCUG 13145 / JCM 31913 / LMG 7466 / NCTC 11488 / FDC 602W) (Vibrio succinogenes)).